Here is a 196-residue protein sequence, read N- to C-terminus: Mpv17-like protein (196 aa).

The Cytoplasmic segment spans residues 1–16; it reads MVSWWQALTRAAGRYP. The segment at 16 to 55 is targeting to peroxisomes; the sequence is PWPANVLLYAGFFSGGDALQQVLRGGPADWQHTRHVATVA. A helical membrane pass occupies residues 17 to 34; sequence WPANVLLYAGFFSGGDAL. Over 35–50 the chain is Lumenal; that stretch reads QQVLRGGPADWQHTRH. A helical transmembrane segment spans residues 51 to 67; it reads VATVAVAFHANLNYVWL. The Cytoplasmic segment spans residues 68–90; it reads NLLERALPGRAPRTILAKVLCDQ. A helical membrane pass occupies residues 91–108; that stretch reads ALGGPVYVSTFYAGMSIL. The Lumenal portion of the chain corresponds to 109–150; it reads QGKDDIFLDMRQKFWNTYKSGLMYWPFVQLINFSLIPIRWRT. A helical transmembrane segment spans residues 151 to 167; it reads AYTGLCGFLWATFLCFS. The Cytoplasmic segment spans residues 168–196; that stretch reads QQEGDGTFKSAFTFRRIKVTNEVEKPSEK.

It belongs to the peroxisomal membrane protein PXMP2/4 family.

It localises to the peroxisome membrane. Its function is as follows. Participates in reactive oxygen species metabolism by up- or down-regulation of the genes of antioxidant enzymes. Protective against the mitochondrial apoptotic cascade. This chain is Mpv17-like protein (MPV17L), found in Bos taurus (Bovine).